The primary structure comprises 397 residues: Acetate kinase (397 aa).

Position 8 (Asn8) interacts with Mg(2+). Lys15 serves as a coordination point for ATP. Arg92 contributes to the substrate binding site. Asp149 serves as the catalytic Proton donor/acceptor. ATP-binding positions include 209-213 (HLGNG), 283-285 (DFR), and 331-335 (GVGEN). Glu385 is a Mg(2+) binding site.

It belongs to the acetokinase family. In terms of assembly, homodimer. The cofactor is Mg(2+). Requires Mn(2+) as cofactor.

It is found in the cytoplasm. The enzyme catalyses acetate + ATP = acetyl phosphate + ADP. It functions in the pathway metabolic intermediate biosynthesis; acetyl-CoA biosynthesis; acetyl-CoA from acetate: step 1/2. Catalyzes the formation of acetyl phosphate from acetate and ATP. Can also catalyze the reverse reaction. In Corynebacterium glutamicum (strain ATCC 13032 / DSM 20300 / JCM 1318 / BCRC 11384 / CCUG 27702 / LMG 3730 / NBRC 12168 / NCIMB 10025 / NRRL B-2784 / 534), this protein is Acetate kinase.